Consider the following 189-residue polypeptide: Crossover junction endodeoxyribonuclease RuvC (189 aa).

Residues D8, E67, and D139 contribute to the active site. 3 residues coordinate Mg(2+): D8, E67, and D139.

Belongs to the RuvC family. Homodimer which binds Holliday junction (HJ) DNA. The HJ becomes 2-fold symmetrical on binding to RuvC with unstacked arms; it has a different conformation from HJ DNA in complex with RuvA. In the full resolvosome a probable DNA-RuvA(4)-RuvB(12)-RuvC(2) complex forms which resolves the HJ. Requires Mg(2+) as cofactor.

It is found in the cytoplasm. It catalyses the reaction Endonucleolytic cleavage at a junction such as a reciprocal single-stranded crossover between two homologous DNA duplexes (Holliday junction).. In terms of biological role, the RuvA-RuvB-RuvC complex processes Holliday junction (HJ) DNA during genetic recombination and DNA repair. Endonuclease that resolves HJ intermediates. Cleaves cruciform DNA by making single-stranded nicks across the HJ at symmetrical positions within the homologous arms, yielding a 5'-phosphate and a 3'-hydroxyl group; requires a central core of homology in the junction. The consensus cleavage sequence is 5'-(A/T)TT(C/G)-3'. Cleavage occurs on the 3'-side of the TT dinucleotide at the point of strand exchange. HJ branch migration catalyzed by RuvA-RuvB allows RuvC to scan DNA until it finds its consensus sequence, where it cleaves and resolves the cruciform DNA. This chain is Crossover junction endodeoxyribonuclease RuvC, found in Histophilus somni (strain 129Pt) (Haemophilus somnus).